The chain runs to 86 residues: UPF0297 protein CA_C1679 (86 aa).

This sequence belongs to the UPF0297 family.

In Clostridium acetobutylicum (strain ATCC 824 / DSM 792 / JCM 1419 / IAM 19013 / LMG 5710 / NBRC 13948 / NRRL B-527 / VKM B-1787 / 2291 / W), this protein is UPF0297 protein CA_C1679.